The primary structure comprises 144 residues: INO80 complex subunit 5 (144 aa).

The tract at residues 1–58 is disordered; that stretch reads MAAQKKQGERVLPARSTRKRRQLPDMLYYDERTDSYVTPQERSLSEANAQTRPAPNTI. Residues 35–58 show a composition bias toward polar residues; sequence SYVTPQERSLSEANAQTRPAPNTI.

As to quaternary structure, component of the INO80 chromatin remodeling complex.

The protein resides in the nucleus. Component of the INO80 complex which remodels chromatin by shifting nucleosomes and is involved in DNA repair. This Schizosaccharomyces pombe (strain 972 / ATCC 24843) (Fission yeast) protein is INO80 complex subunit 5 (iec5).